The sequence spans 202 residues: dTTP/UTP pyrophosphatase (202 aa).

Asp83 functions as the Proton acceptor in the catalytic mechanism.

The protein belongs to the Maf family. YhdE subfamily. The cofactor is a divalent metal cation.

It localises to the cytoplasm. The enzyme catalyses dTTP + H2O = dTMP + diphosphate + H(+). The catalysed reaction is UTP + H2O = UMP + diphosphate + H(+). Functionally, nucleoside triphosphate pyrophosphatase that hydrolyzes dTTP and UTP. May have a dual role in cell division arrest and in preventing the incorporation of modified nucleotides into cellular nucleic acids. This is dTTP/UTP pyrophosphatase from Polaromonas sp. (strain JS666 / ATCC BAA-500).